We begin with the raw amino-acid sequence, 309 residues long: Homoserine kinase (309 aa).

ATP is bound at residue 95–105 (PHGRGLGSSSA).

The protein belongs to the GHMP kinase family. Homoserine kinase subfamily.

The protein resides in the cytoplasm. It catalyses the reaction L-homoserine + ATP = O-phospho-L-homoserine + ADP + H(+). It functions in the pathway amino-acid biosynthesis; L-threonine biosynthesis; L-threonine from L-aspartate: step 4/5. Functionally, catalyzes the ATP-dependent phosphorylation of L-homoserine to L-homoserine phosphate. The protein is Homoserine kinase of Streptomyces coelicolor (strain ATCC BAA-471 / A3(2) / M145).